A 344-amino-acid chain; its full sequence is Estradiol 17-beta-dehydrogenase 1 (344 aa).

An NAD(+)-binding site is contributed by Ser3 to Lys32. Ser143 provides a ligand contact to substrate. Tyr156 (proton acceptor) is an active-site residue.

Belongs to the short-chain dehydrogenases/reductases (SDR) family. As to quaternary structure, homodimer.

The protein resides in the cytoplasm. It catalyses the reaction 17beta-estradiol + NAD(+) = estrone + NADH + H(+). The catalysed reaction is 17beta-estradiol + NADP(+) = estrone + NADPH + H(+). It functions in the pathway steroid biosynthesis; estrogen biosynthesis. Functionally, favors the reduction of estrogens and androgens. Uses preferentially NADH. The protein is Estradiol 17-beta-dehydrogenase 1 (Hsd17b1) of Rattus norvegicus (Rat).